The primary structure comprises 133 residues: DNA-directed RNA polymerases I, II, and III subunit rpabc2 (133 aa).

Acidic residues predominate over residues Met-1–Thr-32. The segment at Met-1–Pro-55 is disordered.

This sequence belongs to the archaeal Rpo6/eukaryotic RPB6 RNA polymerase subunit family. In terms of assembly, component of the RNA polymerase I (Pol I), RNA polymerase II (Pol II) and RNA polymerase III (Pol III) complexes consisting of at least 13, 12 and 17 subunits, respectively.

The protein localises to the nucleus. DNA-dependent RNA polymerases catalyze the transcription of DNA into RNA using the four ribonucleoside triphosphates as substrates. Common component of RNA polymerases I, II and III which synthesize ribosomal RNA precursors, mRNA precursors and many functional non-coding RNAs, and small RNAs, such as 5S rRNA and tRNAs, respectively. Pol II is the central component of the basal RNA polymerase II transcription machinery. Pols are composed of mobile elements that move relative to each other. In Pol II, RPB6 is part of the clamp element and together with parts of RPB1 and RPB2 forms a pocket to which the RPB4-RPB7 subcomplex binds. The chain is DNA-directed RNA polymerases I, II, and III subunit rpabc2 (polr2f) from Dictyostelium discoideum (Social amoeba).